A 138-amino-acid chain; its full sequence is Putative pre-16S rRNA nuclease (138 aa).

Belongs to the YqgF nuclease family.

Its subcellular location is the cytoplasm. Functionally, could be a nuclease involved in processing of the 5'-end of pre-16S rRNA. This Mycoplasma genitalium (strain ATCC 33530 / DSM 19775 / NCTC 10195 / G37) (Mycoplasmoides genitalium) protein is Putative pre-16S rRNA nuclease.